A 711-amino-acid polypeptide reads, in one-letter code: Zinc finger CCCH domain-containing protein 43 (711 aa).

Positions 1-49 (MPQDDDWFWGRPTPVVVGDGETTSKPKPPVAGKTKKVEEQHPRRPGEPD) are disordered. Over residues 35-47 (KKVEEQHPRRPGE) the composition is skewed to basic and acidic residues. 3 consecutive C3H1-type zinc fingers follow at residues 44-72 (RPGE…HPDP), 90-118 (RPGE…HPPR), and 157-185 (RPGT…HPDP). In terms of domain architecture, MIF4G spans 384–637 (LKTLKSILNT…GAISYLIEKE (254 aa)).

In Oryza sativa subsp. japonica (Rice), this protein is Zinc finger CCCH domain-containing protein 43.